Here is a 141-residue protein sequence, read N- to C-terminus: ATP synthase F(0) complex subunit C2, mitochondrial (141 aa).

A mitochondrion-targeting transit peptide spans 1-66 (MYACSKFVST…RSFQTSAISR (66 aa)). A helical transmembrane segment spans residues 82–102 (VGVAGSGAGIGTVFGSLIIGY). K109 is modified (N6,N6,N6-trimethyllysine). Residues 117–137 (ILGFALSEAMGLFCLMVAFLI) traverse the membrane as a helical segment.

This sequence belongs to the ATPase C chain family. In terms of assembly, F-type ATPases have 2 components, CF(1) - the catalytic core - and CF(0) - the membrane proton channel. CF(1) has five subunits: alpha(3), beta(3), gamma(1), delta(1), epsilon(1). CF(0) has three main subunits: a, b and c. Interacts with DNAJC30; interaction is direct. In terms of processing, trimethylated by ATPSCKMT at Lys-109. Methylation is required for proper incorporation of the C subunit into the ATP synthase complex and mitochondrial respiration.

The protein localises to the mitochondrion membrane. Its function is as follows. Mitochondrial membrane ATP synthase (F(1)F(0) ATP synthase or Complex V) produces ATP from ADP in the presence of a proton gradient across the membrane which is generated by electron transport complexes of the respiratory chain. F-type ATPases consist of two structural domains, F(1) - containing the extramembraneous catalytic core and F(0) - containing the membrane proton channel, linked together by a central stalk and a peripheral stalk. During catalysis, ATP synthesis in the catalytic domain of F(1) is coupled via a rotary mechanism of the central stalk subunits to proton translocation. Part of the complex F(0) domain. A homomeric c-ring of probably 10 subunits is part of the complex rotary element. This chain is ATP synthase F(0) complex subunit C2, mitochondrial, found in Rattus norvegicus (Rat).